A 215-amino-acid chain; its full sequence is Adenylate kinase (215 aa).

An ATP-binding site is contributed by 10–15 (GAGKGT). The NMP stretch occupies residues 30–59 (STGDLLRAAVAAGTPLGKEAKAYMDRGELV). Residues threonine 31, arginine 36, 57 to 59 (ELV), 85 to 88 (GFPR), and glutamine 92 each bind AMP. The interval 126–163 (GRRTCKSCGQMYNVYYSPSKVEGKCDKCGGELFQRDDD) is LID. Position 127 (arginine 127) interacts with ATP. Zn(2+) contacts are provided by cysteine 130, cysteine 133, cysteine 150, and cysteine 153. AMP-binding residues include arginine 160 and arginine 171. Glycine 199 is a binding site for ATP.

The protein belongs to the adenylate kinase family. In terms of assembly, monomer.

It localises to the cytoplasm. It carries out the reaction AMP + ATP = 2 ADP. It participates in purine metabolism; AMP biosynthesis via salvage pathway; AMP from ADP: step 1/1. Functionally, catalyzes the reversible transfer of the terminal phosphate group between ATP and AMP. Plays an important role in cellular energy homeostasis and in adenine nucleotide metabolism. The polypeptide is Adenylate kinase (Thermodesulfovibrio yellowstonii (strain ATCC 51303 / DSM 11347 / YP87)).